Here is a 722-residue protein sequence, read N- to C-terminus: Homeobox-leucine zipper protein HDG11 (722 aa).

A compositionally biased stretch (gly residues) spans 1–19; sequence MSFVVGVGGSGSGSGGDGG. The segment at 1–42 is disordered; sequence MSFVVGVGGSGSGSGGDGGGSHHHDGSETDRKKKRYHRHTAQ. Positions 20-31 are enriched in basic and acidic residues; sequence GSHHHDGSETDR. The segment at residues 32–91 is a DNA-binding region (homeobox); the sequence is KKKRYHRHTAQQIQRLESSFKECPHPDEKQRNQLSRELGLAPRQIKFWFQNRRTQLKAQH. A coiled-coil region spans residues 81 to 161; it reads QNRRTQLKAQ…LERMSTIASK (81 aa). Residues 227-460 enclose the START domain; sequence SDMDKPIMTG…LQRMCERFAS (234 aa).

It belongs to the HD-ZIP homeobox family. Class IV subfamily. As to quaternary structure, interacts with BBM. In terms of tissue distribution, expressed in apical meristems and young epidermal tissue including trichomes and stipules. Expressed in lateral root tips, the L1 layer of apical inflorescence meristems and early flower primordia, carpel and petal epidermis, stigma papillae, ovule primordia, nucellus and embryo.

The protein resides in the nucleus. Transcription factor which acts as a positive regulator of drought stress tolerance. Can transactivate CIPK3, NCED3 and ERECTA. Transactivates several cell-wall-loosening protein genes by directly binding to HD motifs in their promoters. These target genes play important roles in coordinating cell-wall extensibility with root development and growth. Transactivates CYP74A/AOS, AOC3, OPR3 and 4CLL5/OPCL1 genes by directly binding to HD motifs in their promoters. These target genes are involved in jasmonate (JA) biosynthesis, and JA signaling affects root architecture by activating auxin signaling, which promotes lateral root formation. Acts as a negative regulator of trichome branching. Required for the establishment of giant cell identity on the abaxial side of sepals. Seems to promote cell differentiation. May regulate cell differentiation and proliferation during root and shoot meristem development. This chain is Homeobox-leucine zipper protein HDG11, found in Arabidopsis thaliana (Mouse-ear cress).